Here is a 347-residue protein sequence, read N- to C-terminus: Bombesin receptor-activated protein C6orf89 (347 aa).

The Cytoplasmic portion of the chain corresponds to 1 to 58 (MDLAANEISIYDKLSETVDLVRQTGHQCGMSEKAIEKFIRQLLEKNEPQRPPPQYPLL). A helical transmembrane segment spans residues 59 to 79 (IVVYKVLATLGLILLTAYFVI). The Extracellular portion of the chain corresponds to 80-347 (QPFSPLAPEP…ICDGTAFSEL (268 aa)).

As to quaternary structure, homodimer. Interacts with BRS3. Interacts (via N-terminus) with SIN3B. Post-translationally, glycosylated.

The protein localises to the golgi apparatus membrane. It localises to the midbody. Its subcellular location is the cytoplasm. It is found in the nucleus. The protein resides in the nucleolus. Its function is as follows. Exhibits histone deacetylase (HDAC) enhancer properties. May play a role in cell cycle progression and wound repair of bronchial epithelial cells. This chain is Bombesin receptor-activated protein C6orf89 (C6orf89), found in Homo sapiens (Human).